The primary structure comprises 1043 residues: Liprin-alpha-4 (1043 aa).

Coiled coils occupy residues 24–332 (EKVR…GRGG) and 426–470 (ILDA…RVTS). A disordered region spans residues 498–617 (SASPPLSGRS…AKRKGIKSSI (120 aa)). Ser-500 is modified (phosphoserine). A compositionally biased stretch (polar residues) spans 505–516 (GRSTPKLTSRSA). A Phosphoserine modification is found at Ser-541. Basic and acidic residues predominate over residues 544–555 (SREENREDKATI). Low complexity predominate over residues 590 to 602 (QDSNPSSSNSSQD). 3 SAM domains span residues 688 to 754 (WDGP…MVSL), 803 to 867 (NHEW…LKRL), and 891 to 960 (WTND…LLAL). The stretch at 864–890 (LKRLNYDRKELEKRREESQHEIKDVLV) forms a coiled coil.

It belongs to the liprin family. Liprin-alpha subfamily. As to quaternary structure, forms homodimers and heterodimers with liprins-alpha and liprins-beta. Interacts with the second PTPase domain of PTPRD, PTPRF and PTPRS. Interacts with RIMS1 and RIMS2. Interacts with GIT1 and GIT2. Interacts with GRIP1. Interacts with KIF1A.

The protein resides in the cytoplasm. Its subcellular location is the cell surface. Its function is as follows. May regulate the disassembly of focal adhesions. May localize receptor-like tyrosine phosphatases type 2A at specific sites on the plasma membrane, possibly regulating their interaction with the extracellular environment and their association with substrates. The polypeptide is Liprin-alpha-4 (Ppfia4) (Rattus norvegicus (Rat)).